Here is a 166-residue protein sequence, read N- to C-terminus: Protein-export protein SecB (166 aa).

Belongs to the SecB family. As to quaternary structure, homotetramer, a dimer of dimers. One homotetramer interacts with 1 SecA dimer.

It localises to the cytoplasm. In terms of biological role, one of the proteins required for the normal export of preproteins out of the cell cytoplasm. It is a molecular chaperone that binds to a subset of precursor proteins, maintaining them in a translocation-competent state. It also specifically binds to its receptor SecA. This chain is Protein-export protein SecB, found in Sinorhizobium fredii (strain NBRC 101917 / NGR234).